The following is a 324-amino-acid chain: Dioxygenase tasH (324 aa).

The signal sequence occupies residues 1–25 (MRSMSLWMLIGPVTGIATWASLRYA). Residues His50, His96, and His284 each coordinate Zn(2+).

This sequence belongs to the DODA-type extradiol aromatic ring-opening dioxygenase family. In terms of assembly, monomer. It depends on Zn(2+) as a cofactor.

Dioxygenase; part of the gene cluster that mediates the biosynthesis of the tetramic acids Sch210971 and Sch210972, potential anti-HIV fungal natural product that contain a decalin core. The PKS module of tasS together with the enoylreductase tasC catalyze the formation of the polyketide unit which is then conjugated to 4-hydroxyl-4-methyl glutamate (HMG) by the condensation domain of the tasS NRPS module. One unique structural feature of Sch210971 and Sch210972 is the tetramic acid motif proposed to be derived from the non-proteinogenic amino acid HMG, by a Dieckmann-type condensation catalyzed by the reductase domain of tasS. The aldolase tasA catalyzes the aldol condensation of 2 molecules of pyruvic acid to yield the intermediate 4-hydroxyl-4-methyl-2-oxoglutarate (HMOG), which can then be stereoselectively transaminated, may be by tasG, to form HMG. The Diels-Alderase tas3 then uses the Dieckmann product of tasS as substrate and catalyzes the Diels-Alder cycloaddition to form the decalin ring of Sch210971 and Sch210972. In Hapsidospora irregularis, this protein is Dioxygenase tasH.